The following is a 122-amino-acid chain: Large ribosomal subunit protein uL18 (122 aa).

A compositionally biased stretch (basic residues) spans M1 to N20. Positions M1–I22 are disordered.

Belongs to the universal ribosomal protein uL18 family. In terms of assembly, part of the 50S ribosomal subunit; part of the 5S rRNA/L5/L18/L25 subcomplex. Contacts the 5S and 23S rRNAs.

In terms of biological role, this is one of the proteins that bind and probably mediate the attachment of the 5S RNA into the large ribosomal subunit, where it forms part of the central protuberance. The chain is Large ribosomal subunit protein uL18 from Alkaliphilus metalliredigens (strain QYMF).